The following is a 258-amino-acid chain: 3-deoxy-manno-octulosonate cytidylyltransferase (258 aa).

The protein belongs to the KdsB family.

The protein resides in the cytoplasm. It carries out the reaction 3-deoxy-alpha-D-manno-oct-2-ulosonate + CTP = CMP-3-deoxy-beta-D-manno-octulosonate + diphosphate. It functions in the pathway nucleotide-sugar biosynthesis; CMP-3-deoxy-D-manno-octulosonate biosynthesis; CMP-3-deoxy-D-manno-octulosonate from 3-deoxy-D-manno-octulosonate and CTP: step 1/1. Its pathway is bacterial outer membrane biogenesis; lipopolysaccharide biosynthesis. Activates KDO (a required 8-carbon sugar) for incorporation into bacterial lipopolysaccharide in Gram-negative bacteria. This chain is 3-deoxy-manno-octulosonate cytidylyltransferase, found in Gemmatimonas aurantiaca (strain DSM 14586 / JCM 11422 / NBRC 100505 / T-27).